The primary structure comprises 625 residues: Chaperone protein HtpG (625 aa).

The interval 1–332 (MSNKQNTAVQ…TEDLSLNVSR (332 aa)) is a; substrate-binding. Residues 333 to 545 (EIVQSSPVMS…KDAMDSQMER (213 aa)) form a b region. The interval 546-625 (MMKMMQQEMP…ELIEAATLSR (80 aa)) is c.

Belongs to the heat shock protein 90 family. As to quaternary structure, homodimer.

The protein localises to the cytoplasm. Functionally, molecular chaperone. Has ATPase activity. This chain is Chaperone protein HtpG, found in Chlorobium luteolum (strain DSM 273 / BCRC 81028 / 2530) (Pelodictyon luteolum).